Consider the following 211-residue polypeptide: Uracil phosphoribosyltransferase (211 aa).

5-phospho-alpha-D-ribose 1-diphosphate is bound by residues Arg78, Arg103, and 130 to 138 (DPMLATGGS). Uracil-binding positions include Ile193 and 198–200 (GDA). Asp199 is a binding site for 5-phospho-alpha-D-ribose 1-diphosphate.

It belongs to the UPRTase family. The cofactor is Mg(2+).

It carries out the reaction UMP + diphosphate = 5-phospho-alpha-D-ribose 1-diphosphate + uracil. The protein operates within pyrimidine metabolism; UMP biosynthesis via salvage pathway; UMP from uracil: step 1/1. Its activity is regulated as follows. Allosterically activated by GTP. Its function is as follows. Catalyzes the conversion of uracil and 5-phospho-alpha-D-ribose 1-diphosphate (PRPP) to UMP and diphosphate. This Hahella chejuensis (strain KCTC 2396) protein is Uracil phosphoribosyltransferase.